Here is a 274-residue protein sequence, read N- to C-terminus: Kit ligand (274 aa).

A signal peptide spans 1–25 (MKKTQTWIITCIYLQLLLFNPLVHT). Gln26 is subject to Pyrrolidone carboxylic acid. The Extracellular portion of the chain corresponds to 26-215 (QGICSNRVTD…SNSIEDSSLQ (190 aa)). 2 disulfide bridges follow: Cys29–Cys114 and Cys68–Cys164. Residues Asn90, Asn145, and Asn196 are each glycosylated (N-linked (GlcNAc...) asparagine). Residues 216–238 (WAAVALPAFFSLVIGFAFGAFYW) form a helical membrane-spanning segment. The Cytoplasmic portion of the chain corresponds to 239 to 274 (KKKQPNLTRTVENRQINEEDNEISMLQEKEREFQEV).

This sequence belongs to the SCF family. Homodimer, non-covalently linked. In terms of processing, a soluble form is produced by proteolytic processing of isoform 1 in the extracellular domain.

The protein resides in the cell membrane. The protein localises to the cytoplasm. It localises to the cytoskeleton. Its subcellular location is the cell projection. It is found in the lamellipodium. The protein resides in the filopodium. The protein localises to the secreted. Its function is as follows. Stimulates the proliferation of mast cells. Able to augment the proliferation of both myeloid and lymphoid hematopoietic progenitors in bone marrow culture. Also mediates cell-cell adhesion. Acts synergistically with other cytokines, probably interleukins. The polypeptide is Kit ligand (KITLG) (Bos taurus (Bovine)).